Consider the following 125-residue polypeptide: Ribonuclease P protein component (125 aa).

The protein belongs to the RnpA family. In terms of assembly, consists of a catalytic RNA component (M1 or rnpB) and a protein subunit.

The catalysed reaction is Endonucleolytic cleavage of RNA, removing 5'-extranucleotides from tRNA precursor.. Its function is as follows. RNaseP catalyzes the removal of the 5'-leader sequence from pre-tRNA to produce the mature 5'-terminus. It can also cleave other RNA substrates such as 4.5S RNA. The protein component plays an auxiliary but essential role in vivo by binding to the 5'-leader sequence and broadening the substrate specificity of the ribozyme. The protein is Ribonuclease P protein component of Idiomarina loihiensis (strain ATCC BAA-735 / DSM 15497 / L2-TR).